Reading from the N-terminus, the 60-residue chain is Large ribosomal subunit protein bL33 (60 aa).

This sequence belongs to the bacterial ribosomal protein bL33 family.

The protein is Large ribosomal subunit protein bL33 of Flavobacterium psychrophilum (strain ATCC 49511 / DSM 21280 / CIP 103535 / JIP02/86).